The primary structure comprises 346 residues: 3-isopropylmalate dehydrogenase (346 aa).

76 to 87 (GPQWTDPNNRPE) contacts NAD(+). Residues arginine 94, arginine 104, arginine 132, and aspartate 217 each contribute to the substrate site. Mg(2+) contacts are provided by aspartate 217, aspartate 241, and aspartate 245. Position 275–287 (275–287 (GSAPDIANQNLAN)) interacts with NAD(+).

The protein belongs to the isocitrate and isopropylmalate dehydrogenases family. LeuB type 1 subfamily. In terms of assembly, homodimer. Mg(2+) serves as cofactor. Mn(2+) is required as a cofactor.

The protein resides in the cytoplasm. It carries out the reaction (2R,3S)-3-isopropylmalate + NAD(+) = 4-methyl-2-oxopentanoate + CO2 + NADH. Its pathway is amino-acid biosynthesis; L-leucine biosynthesis; L-leucine from 3-methyl-2-oxobutanoate: step 3/4. Its function is as follows. Catalyzes the oxidation of 3-carboxy-2-hydroxy-4-methylpentanoate (3-isopropylmalate) to 3-carboxy-4-methyl-2-oxopentanoate. The product decarboxylates to 4-methyl-2 oxopentanoate. This is 3-isopropylmalate dehydrogenase from Staphylococcus haemolyticus (strain JCSC1435).